Reading from the N-terminus, the 439-residue chain is Xylose isomerase (439 aa).

Residues histidine 101 and aspartate 104 contribute to the active site. Positions 232, 268, 271, 296, 307, 309, and 339 each coordinate Mg(2+).

Belongs to the xylose isomerase family. As to quaternary structure, homotetramer. Mg(2+) serves as cofactor.

It localises to the cytoplasm. The enzyme catalyses alpha-D-xylose = alpha-D-xylulofuranose. This chain is Xylose isomerase, found in Photorhabdus laumondii subsp. laumondii (strain DSM 15139 / CIP 105565 / TT01) (Photorhabdus luminescens subsp. laumondii).